The primary structure comprises 580 residues: Thymidine kinase (580 aa).

Disordered regions lie at residues 1–60 (MAEG…KSVK) and 133–157 (VCGR…ASMG). A compositionally biased stretch (pro residues) spans 137–149 (PPLPPPNHPPPAT). 260 to 267 (GVMGVGKS) lines the ATP pocket. Glu-287 functions as the Proton acceptor in the catalytic mechanism. Gln-325 provides a ligand contact to substrate. Arg-415 is a binding site for ATP. Arg-421 is a substrate binding site.

Belongs to the herpesviridae thymidine kinase family. In terms of assembly, homodimer.

It catalyses the reaction thymidine + ATP = dTMP + ADP + H(+). In terms of biological role, catalyzes the transfer of the gamma-phospho group of ATP to thymidine to generate dTMP in the salvage pathway of pyrimidine synthesis. The dTMP serves as a substrate for DNA polymerase during viral DNA replication. Allows the virus to be reactivated and to grow in non-proliferative cells lacking a high concentration of phosphorylated nucleic acid precursors. The sequence is that of Thymidine kinase from Human herpesvirus 8 type P (isolate GK18) (HHV-8).